Consider the following 243-residue polypeptide: Cell division protein ZipA (243 aa).

Residues 1-4 are Periplasmic-facing; it reads MSDM. Residues 5–25 form a helical membrane-spanning segment; the sequence is AMIRIGILIAGLLLVAAIFLF. The Cytoplasmic portion of the chain corresponds to 26–243; sequence GRPKKSPQGR…APPLTKSPRW (218 aa). Residues 30–89 are disordered; that stretch reads KSPQGRRVDKDEGQPRERREPVISSEFGVEDDAAERAEGVEQSELNLEGQDASGGNEVGK. Over residues 35–50 the composition is skewed to basic and acidic residues; the sequence is RRVDKDEGQPRERREP.

The protein belongs to the ZipA family. As to quaternary structure, interacts with FtsZ via their C-terminal domains.

The protein resides in the cell inner membrane. Functionally, essential cell division protein that stabilizes the FtsZ protofilaments by cross-linking them and that serves as a cytoplasmic membrane anchor for the Z ring. Also required for the recruitment to the septal ring of downstream cell division proteins. This is Cell division protein ZipA from Xanthomonas euvesicatoria pv. vesicatoria (strain 85-10) (Xanthomonas campestris pv. vesicatoria).